We begin with the raw amino-acid sequence, 179 residues long: Large ribosomal subunit protein uL6 (179 aa).

The protein belongs to the universal ribosomal protein uL6 family. As to quaternary structure, part of the 50S ribosomal subunit.

This protein binds to the 23S rRNA, and is important in its secondary structure. It is located near the subunit interface in the base of the L7/L12 stalk, and near the tRNA binding site of the peptidyltransferase center. This Chlorobium luteolum (strain DSM 273 / BCRC 81028 / 2530) (Pelodictyon luteolum) protein is Large ribosomal subunit protein uL6.